A 533-amino-acid chain; its full sequence is Apolipoprotein N-acyltransferase (533 aa).

6 helical membrane-spanning segments follow: residues 17-37 (ALLA…FGFF), 74-94 (WLFG…ALLI), 105-125 (LAIL…AVLA), 127-147 (LLWS…GLLE), 178-198 (VIGV…PALL), and 205-225 (VPGI…GYYA). In terms of domain architecture, CN hydrolase spans 245–495 (VQPAIDQEAK…QGFVDSTLSG (251 aa)). The Proton acceptor role is filled by Glu-290. Residue Lys-354 is part of the active site. Cys-407 serves as the catalytic Nucleophile. A helical transmembrane segment spans residues 509-529 (YFWLIIGIVGMIAVISRMGFI).

The protein belongs to the CN hydrolase family. Apolipoprotein N-acyltransferase subfamily.

Its subcellular location is the cell inner membrane. The enzyme catalyses N-terminal S-1,2-diacyl-sn-glyceryl-L-cysteinyl-[lipoprotein] + a glycerophospholipid = N-acyl-S-1,2-diacyl-sn-glyceryl-L-cysteinyl-[lipoprotein] + a 2-acyl-sn-glycero-3-phospholipid + H(+). The protein operates within protein modification; lipoprotein biosynthesis (N-acyl transfer). In terms of biological role, catalyzes the phospholipid dependent N-acylation of the N-terminal cysteine of apolipoprotein, the last step in lipoprotein maturation. In Rhizobium rhizogenes (strain K84 / ATCC BAA-868) (Agrobacterium radiobacter), this protein is Apolipoprotein N-acyltransferase.